We begin with the raw amino-acid sequence, 364 residues long: Histidinol-phosphate aminotransferase 1 (364 aa).

Position 211 is an N6-(pyridoxal phosphate)lysine (K211).

Belongs to the class-II pyridoxal-phosphate-dependent aminotransferase family. Histidinol-phosphate aminotransferase subfamily. In terms of assembly, homodimer. It depends on pyridoxal 5'-phosphate as a cofactor.

It catalyses the reaction L-histidinol phosphate + 2-oxoglutarate = 3-(imidazol-4-yl)-2-oxopropyl phosphate + L-glutamate. The protein operates within amino-acid biosynthesis; L-histidine biosynthesis; L-histidine from 5-phospho-alpha-D-ribose 1-diphosphate: step 7/9. The polypeptide is Histidinol-phosphate aminotransferase 1 (Legionella pneumophila (strain Paris)).